The sequence spans 416 residues: CinA-like protein (416 aa).

The protein belongs to the CinA family.

The protein is CinA-like protein of Thermosynechococcus vestitus (strain NIES-2133 / IAM M-273 / BP-1).